A 378-amino-acid chain; its full sequence is Mannitol-1-phosphate 5-dehydrogenase (378 aa).

4–15 (SVHFGAGNIGRG) is a binding site for NAD(+).

The protein belongs to the mannitol dehydrogenase family.

The catalysed reaction is D-mannitol 1-phosphate + NAD(+) = beta-D-fructose 6-phosphate + NADH + H(+). In Streptococcus pneumoniae (strain ATCC 700669 / Spain 23F-1), this protein is Mannitol-1-phosphate 5-dehydrogenase.